Consider the following 287-residue polypeptide: tRNA uridine(34) hydroxylase (287 aa).

Residues 132-226 (EGRPVVMLDT…YFEEVGGAHY (95 aa)) enclose the Rhodanese domain. The Cysteine persulfide intermediate role is filled by Cys186.

Belongs to the TrhO family.

It carries out the reaction uridine(34) in tRNA + AH2 + O2 = 5-hydroxyuridine(34) in tRNA + A + H2O. Functionally, catalyzes oxygen-dependent 5-hydroxyuridine (ho5U) modification at position 34 in tRNAs. The chain is tRNA uridine(34) hydroxylase from Paraburkholderia xenovorans (strain LB400).